Here is a 55-residue protein sequence, read N- to C-terminus: Large ribosomal subunit protein bL33A (55 aa).

Belongs to the bacterial ribosomal protein bL33 family.

This chain is Large ribosomal subunit protein bL33A, found in Rhodococcus jostii (strain RHA1).